Here is a 142-residue protein sequence, read N- to C-terminus: Large ribosomal subunit protein uL22c (142 aa).

Belongs to the universal ribosomal protein uL22 family. As to quaternary structure, part of the 50S ribosomal subunit.

The protein resides in the plastid. Its subcellular location is the chloroplast. This protein binds specifically to 23S rRNA. Its function is as follows. The globular domain of the protein is located near the polypeptide exit tunnel on the outside of the subunit, while an extended beta-hairpin is found that lines the wall of the exit tunnel in the center of the 70S ribosome. This Ceratophyllum demersum (Rigid hornwort) protein is Large ribosomal subunit protein uL22c (rpl22).